Here is a 50-residue protein sequence, read N- to C-terminus: MADNTDLSFTGLTDEQAQELHSVYMSGLFLFAAVAVVAHLATYIWRPWFG.

At 2–22 (ADNTDLSFTGLTDEQAQELHS) the chain is on the cytoplasmic side. Positions 21 and 39 each coordinate a bacteriochlorophyll. Residues 23–45 (VYMSGLFLFAAVAVVAHLATYIW) form a helical membrane-spanning segment. Residues 46–50 (RPWFG) lie on the Periplasmic side of the membrane.

The protein belongs to the antenna complex beta subunit family. In terms of assembly, the core complex is formed by different alpha and beta chains, binding bacteriochlorophyll molecules, and arranged most probably in tetrameric structures disposed around the reaction center. The non-pigmented gamma chains may constitute additional components.

It is found in the cell inner membrane. Antenna complexes are light-harvesting systems, which transfer the excitation energy to the reaction centers. The protein is Light-harvesting protein B-870 beta chain (pufB) of Roseobacter denitrificans (strain ATCC 33942 / OCh 114) (Erythrobacter sp. (strain OCh 114)).